Here is a 348-residue protein sequence, read N- to C-terminus: Mitochondrial glycine transporter (348 aa).

3 Solcar repeats span residues 10 to 94 (TKST…IREN), 130 to 214 (LSNT…SKQH), and 249 to 333 (RAAS…LIRR). 6 helical membrane-spanning segments follow: residues 16-41 (FVAG…TRVQ), 69-95 (GTLP…RENA), 136-161 (LLAG…VRYE), 189-212 (GFGA…EKSK), 253-279 (INFA…KTRI), and 308-326 (GLAL…AWTV).

This sequence belongs to the mitochondrial carrier (TC 2.A.29) family. SLC25A38 subfamily.

The protein resides in the mitochondrion inner membrane. It catalyses the reaction glycine(in) = glycine(out). Mitochondrial glycine transporter that imports glycine into the mitochondrial matrix. Plays an important role in providing glycine for the first enzymatic step in heme biosynthesis, the condensation of glycine with succinyl-CoA to produce 5-aminolevulinate (ALA) in the mitochondrial matrix. This chain is Mitochondrial glycine transporter (mic-13), found in Neurospora crassa (strain ATCC 24698 / 74-OR23-1A / CBS 708.71 / DSM 1257 / FGSC 987).